The chain runs to 89 residues: Small ribosomal subunit protein uS17 (89 aa).

The protein belongs to the universal ribosomal protein uS17 family. In terms of assembly, part of the 30S ribosomal subunit.

One of the primary rRNA binding proteins, it binds specifically to the 5'-end of 16S ribosomal RNA. This is Small ribosomal subunit protein uS17 from Paracidovorax citrulli (strain AAC00-1) (Acidovorax citrulli).